Reading from the N-terminus, the 420-residue chain is Transcription factor bHLH89 (420 aa).

The segment at 196-216 (EENNNLDDGLNRKGRGSKKRK) is disordered. Over residues 207–216 (RKGRGSKKRK) the composition is skewed to basic residues. Residues 212-261 (SKKRKIFPTERERRVHFKDRFGDLKNLIPNPTKNDRASIVGEAIDYIKEL) form the bHLH domain.

In terms of assembly, homodimer. Flowers.

It localises to the nucleus. This chain is Transcription factor bHLH89 (BHLH89), found in Arabidopsis thaliana (Mouse-ear cress).